The following is a 332-amino-acid chain: MKVTFEELKGAFYRVLRSRNIAEDTADECAEMFARTTESGVYSHGVNRFPRFIQQLDNGDIIPDAKPQRVTSLGAIEQWDAQRAIGNLTAKKMMDRAIELASDHGIGLVALRNANHWMRGGSYGWQAAEKGYIGICWTNSIAVMPPWGAKECRIGTNPLIVAIPSTPITMVDMSMSMFSYGMLEVNRLAGRELPVDGGFDDNGQLTKEPGVIEKNRRILPMGYWKGSGLSIVLDMIATLLSNGSSVAEVTQENSDEYGVSQIFIAIEVDKLIDGATRDAKLQRIMDFITTAERADDNVAIRLPGHEFTKLLDDNRRHGITIDDSVWAKIQAL.

The Proton donor role is filled by histidine 44. NAD(+) is bound by residues 168 to 174, 224 to 225, and 304 to 306; these read ITMVDMS, WK, and GHE.

This sequence belongs to the LDH2/MDH2 oxidoreductase family. DlgD subfamily. In terms of assembly, homodimer.

The protein localises to the cytoplasm. It carries out the reaction 3-dehydro-L-gulonate + NAD(+) = 2,3-dioxo-L-gulonate + NADH + H(+). The enzyme catalyses 3-dehydro-L-gulonate + NADP(+) = 2,3-dioxo-L-gulonate + NADPH + H(+). Catalyzes the reduction of 2,3-diketo-L-gulonate in the presence of NADH, to form 3-keto-L-gulonate. The polypeptide is 2,3-diketo-L-gulonate reductase (Salmonella typhimurium (strain LT2 / SGSC1412 / ATCC 700720)).